Reading from the N-terminus, the 158-residue chain is Putative pre-16S rRNA nuclease (158 aa).

Belongs to the YqgF nuclease family.

Its subcellular location is the cytoplasm. Functionally, could be a nuclease involved in processing of the 5'-end of pre-16S rRNA. This Paracoccus denitrificans (strain Pd 1222) protein is Putative pre-16S rRNA nuclease.